The primary structure comprises 803 residues: Translation initiation factor IF-2 (803 aa).

2 disordered regions span residues 93–123 and 138–206; these read TKPV…LNEK and EVKE…ASAK. The span at 111–121 shows a compositional bias: polar residues; it reads VPPTSDTTNLN. Residues 138-155 show a composition bias toward basic and acidic residues; sequence EVKEEAKKTPSEKKETPK. Basic residues predominate over residues 156 to 167; it reads KGPRKETRRSRK. The segment covering 168 to 188 has biased composition (basic and acidic residues); it reads PDKEDKWEREELHMTKLVEER. One can recognise a tr-type G domain in the interval 302 to 471; it reads PRAPVVTIMG…LLQAEVLELK (170 aa). The G1 stretch occupies residues 311 to 318; sequence GHVDHGKT. Residue 311-318 coordinates GTP; sequence GHVDHGKT. The interval 336–340 is G2; that stretch reads GITQH. Residues 357–360 form a G3 region; it reads DTPG. Residues 357-361 and 411-414 contribute to the GTP site; these read DTPGH and NKID. A G4 region spans residues 411 to 414; the sequence is NKID. The segment at 447–449 is G5; sequence SAK.

The protein belongs to the TRAFAC class translation factor GTPase superfamily. Classic translation factor GTPase family. IF-2 subfamily.

The protein localises to the cytoplasm. One of the essential components for the initiation of protein synthesis. Protects formylmethionyl-tRNA from spontaneous hydrolysis and promotes its binding to the 30S ribosomal subunits. Also involved in the hydrolysis of GTP during the formation of the 70S ribosomal complex. The polypeptide is Translation initiation factor IF-2 (Coxiella burnetii (strain RSA 493 / Nine Mile phase I)).